Consider the following 203-residue polypeptide: Small ribosomal subunit protein uS4 (203 aa).

An S4 RNA-binding domain is found at 93 to 156 (QRLDNVVFRL…MKVPAILEAV (64 aa)).

This sequence belongs to the universal ribosomal protein uS4 family. As to quaternary structure, part of the 30S ribosomal subunit. Contacts protein S5. The interaction surface between S4 and S5 is involved in control of translational fidelity.

In terms of biological role, one of the primary rRNA binding proteins, it binds directly to 16S rRNA where it nucleates assembly of the body of the 30S subunit. Its function is as follows. With S5 and S12 plays an important role in translational accuracy. This chain is Small ribosomal subunit protein uS4, found in Lactococcus lactis subsp. lactis (strain IL1403) (Streptococcus lactis).